Here is a 1369-residue protein sequence, read N- to C-terminus: Phosphoribosylformylglycinamidine synthase (1369 aa).

Disordered stretches follow at residues 321 to 352 (HPTAISPFPGASTGAGGEIRDEGATGRGAKPK) and 373 to 400 (ENARDTAQPAAQRNPGDTAPGPVGKPDR). An ATP-binding site is contributed by 330 to 341 (GASTGAGGEIRD). Residue Ala721 participates in ATP binding. The Mg(2+) site is built by Asp722, Glu761, Asn765, and Asp934. Ser936 serves as a coordination point for ATP. A Glutamine amidotransferase type-1 domain is found at 1116–1369 (MAILREQGVN…MFRNARKQMG (254 aa)). Cys1209 (nucleophile) is an active-site residue. Residues His1330 and Glu1332 contribute to the active site.

In the N-terminal section; belongs to the FGAMS family. In terms of assembly, monomer.

It is found in the cytoplasm. The enzyme catalyses N(2)-formyl-N(1)-(5-phospho-beta-D-ribosyl)glycinamide + L-glutamine + ATP + H2O = 2-formamido-N(1)-(5-O-phospho-beta-D-ribosyl)acetamidine + L-glutamate + ADP + phosphate + H(+). The protein operates within purine metabolism; IMP biosynthesis via de novo pathway; 5-amino-1-(5-phospho-D-ribosyl)imidazole from N(2)-formyl-N(1)-(5-phospho-D-ribosyl)glycinamide: step 1/2. Functionally, phosphoribosylformylglycinamidine synthase involved in the purines biosynthetic pathway. Catalyzes the ATP-dependent conversion of formylglycinamide ribonucleotide (FGAR) and glutamine to yield formylglycinamidine ribonucleotide (FGAM) and glutamate. In Ralstonia nicotianae (strain ATCC BAA-1114 / GMI1000) (Ralstonia solanacearum), this protein is Phosphoribosylformylglycinamidine synthase.